Consider the following 147-residue polypeptide: Ribonuclease H (147 aa).

The 142-residue stretch at 1–142 (MREVIIYTDG…CDELARAAIA (142 aa)) folds into the RNase H type-1 domain. D9, E47, D69, and D134 together coordinate Mg(2+).

It belongs to the RNase H family. As to quaternary structure, monomer. Mg(2+) is required as a cofactor.

Its subcellular location is the cytoplasm. The enzyme catalyses Endonucleolytic cleavage to 5'-phosphomonoester.. Endonuclease that specifically degrades the RNA of RNA-DNA hybrids. This chain is Ribonuclease H, found in Symbiobacterium thermophilum (strain DSM 24528 / JCM 14929 / IAM 14863 / T).